The sequence spans 620 residues: 1-deoxy-D-xylulose-5-phosphate synthase (620 aa).

Thiamine diphosphate contacts are provided by residues His80 and 121–123 (GHS). A Mg(2+)-binding site is contributed by Asp152. Thiamine diphosphate is bound by residues 153 to 154 (GA), Asn181, Tyr288, and Glu370. Asn181 provides a ligand contact to Mg(2+).

This sequence belongs to the transketolase family. DXPS subfamily. In terms of assembly, homodimer. Requires Mg(2+) as cofactor. Thiamine diphosphate serves as cofactor.

The catalysed reaction is D-glyceraldehyde 3-phosphate + pyruvate + H(+) = 1-deoxy-D-xylulose 5-phosphate + CO2. It participates in metabolic intermediate biosynthesis; 1-deoxy-D-xylulose 5-phosphate biosynthesis; 1-deoxy-D-xylulose 5-phosphate from D-glyceraldehyde 3-phosphate and pyruvate: step 1/1. In terms of biological role, catalyzes the acyloin condensation reaction between C atoms 2 and 3 of pyruvate and glyceraldehyde 3-phosphate to yield 1-deoxy-D-xylulose-5-phosphate (DXP). This is 1-deoxy-D-xylulose-5-phosphate synthase from Salmonella agona (strain SL483).